The following is a 220-amino-acid chain: Probable GTP-binding protein EngB (220 aa).

Residues 41 to 219 enclose the EngB-type G domain; sequence DRSEVCFAGR…RAEIAALAML (179 aa). GTP is bound by residues 49 to 56, 76 to 80, 96 to 99, 164 to 167, and 197 to 200; these read GRSNVGKS, GRTRE, DLPG, TKVD, and MTSA. Mg(2+)-binding residues include serine 56 and threonine 78.

Belongs to the TRAFAC class TrmE-Era-EngA-EngB-Septin-like GTPase superfamily. EngB GTPase family. Requires Mg(2+) as cofactor.

Its function is as follows. Necessary for normal cell division and for the maintenance of normal septation. The sequence is that of Probable GTP-binding protein EngB from Hyphomonas neptunium (strain ATCC 15444).